The following is a 125-amino-acid chain: Glycine cleavage system H protein (125 aa).

Residues 22–104 (SYVIGITDFA…YDTGWILKLE (83 aa)) enclose the Lipoyl-binding domain. At K63 the chain carries N6-lipoyllysine.

This sequence belongs to the GcvH family. The glycine cleavage system is composed of four proteins: P, T, L and H. (R)-lipoate serves as cofactor.

Functionally, the glycine cleavage system catalyzes the degradation of glycine. The H protein shuttles the methylamine group of glycine from the P protein to the T protein. Is also involved in protein lipoylation via its role as an octanoyl/lipoyl carrier protein intermediate. This Listeria monocytogenes serotype 4a (strain HCC23) protein is Glycine cleavage system H protein.